The chain runs to 572 residues: Butyrate--CoA ligase AAE11, peroxisomal (572 aa).

The Microbody targeting signal motif lies at 570-572 (SRL).

The protein belongs to the ATP-dependent AMP-binding enzyme family. In terms of tissue distribution, expressed in flowers.

The protein localises to the peroxisome. It carries out the reaction a medium-chain fatty acid + ATP + CoA = a medium-chain fatty acyl-CoA + AMP + diphosphate. Functionally, butyrate--CoA ligase that is active in vitro with medium-chain fatty acids, with a preference for hexanoate and octanoate. This is Butyrate--CoA ligase AAE11, peroxisomal (AAE11) from Arabidopsis thaliana (Mouse-ear cress).